A 550-amino-acid polypeptide reads, in one-letter code: Glucose-6-phosphate isomerase (550 aa).

The active-site Proton donor is Glu-356. Active-site residues include His-387 and Lys-515.

Belongs to the GPI family.

It localises to the cytoplasm. The enzyme catalyses alpha-D-glucose 6-phosphate = beta-D-fructose 6-phosphate. The protein operates within carbohydrate biosynthesis; gluconeogenesis. Its pathway is carbohydrate degradation; glycolysis; D-glyceraldehyde 3-phosphate and glycerone phosphate from D-glucose: step 2/4. Catalyzes the reversible isomerization of glucose-6-phosphate to fructose-6-phosphate. This Vibrio campbellii (strain ATCC BAA-1116) protein is Glucose-6-phosphate isomerase.